We begin with the raw amino-acid sequence, 535 residues long: Secreted lipase 5 (535 aa).

Residues Met1–Ala17 form the signal peptide. Asn32 and Asn119 each carry an N-linked (GlcNAc...) asparagine glycan. Residue Ser241 is the Acyl-ester intermediate of the active site. 4 N-linked (GlcNAc...) asparagine glycosylation sites follow: Asn282, Asn341, Asn347, and Asn432.

It belongs to the type-B carboxylesterase/lipase family.

It localises to the secreted. It carries out the reaction a carboxylic ester + H2O = an alcohol + a carboxylate + H(+). Its function is as follows. Secreted lipase involved in plant virulence. Has a substrate preference for p-nitrophenyl esters with a carbon chain length of C8 (p-nitrophenyl caprylate). This chain is Secreted lipase 5, found in Gibberella zeae (strain ATCC MYA-4620 / CBS 123657 / FGSC 9075 / NRRL 31084 / PH-1) (Wheat head blight fungus).